A 1505-amino-acid polypeptide reads, in one-letter code: Synaptonemal complex protein 2 (1505 aa).

Positions 439-483 (EKSNLQKKLTNPLEPDNSSSQRDRKNSQDEITTPSRKKMSEASMI) are disordered. S457 and S465 each carry phosphoserine. A Phosphothreonine modification is found at T471. The residue at position 494 (S494) is a Phosphoserine. T503 carries the phosphothreonine modification. Phosphoserine is present on residues S507, S516, S525, and S534. Residues 536–571 (KSRQSDGRNRGNNRANHNKTATVQNKGHEHHESPDQ) are disordered. 2 positions are modified to phosphothreonine: T613 and T638. Phosphoserine occurs at positions 651, 655, and 746. The segment at 745–764 (KSPSRKSMRSHTKSRKELMS) is disordered. Over residues 748–758 (SRKSMRSHTKS) the composition is skewed to basic residues. S920 is modified (phosphoserine). At T922 the chain carries Phosphothreonine. 2 disordered regions span residues 949-974 (YSRN…QPRS) and 1035-1080 (KEET…NGRE). The span at 953-962 (KNTKKCKSIK) shows a compositional bias: basic residues. 8 positions are modified to phosphoserine: S1121, S1123, S1130, S1146, S1150, S1162, S1165, and S1170. Position 1174 is a phosphothreonine (T1174). S1188 bears the Phosphoserine mark. The segment at 1199 to 1239 (NSYSDVSSNSSEKLYMEPESPDSCENHVQSKREENHAASPF) is disordered. Positions 1200–1209 (SYSDVSSNSS) are enriched in low complexity. A phosphoserine mark is found at S1218 and S1221. The span at 1222 to 1234 (CENHVQSKREENH) shows a compositional bias: basic and acidic residues. A phosphoserine mark is found at S1237, S1280, and S1283. Residue T1318 is modified to Phosphothreonine. A coiled-coil region spans residues 1384–1435 (ENIDKFQVTLLDELEKVEKDSQTLRDLEKEFVDIEEKIVHKMRAFHQSERER).

It belongs to the SYCP2 family. In terms of assembly, component of the lateral elements of synaptonemal complexes. Interacts with TEX11. Heterodimer with SYCP3. Interacts with SYCP3, SMC1A and SMC3. In terms of processing, phosphorylated. As to expression, detected in spermatocytes and testis (at protein level). Spermatocytes and oocytes. Meiotic prophase cells.

The protein localises to the nucleus. Its subcellular location is the chromosome. Functionally, major component of the axial/lateral elements of synaptonemal complexes (SCS) during meiotic prophase. Plays a role in the assembly of synaptonemal complexes. Required for normal meiotic chromosome synapsis during oocyte and spermatocyte development and for normal male and female fertility. Required for insertion of SYCP3 into synaptonemal complexes. May be involved in the organization of chromatin by temporarily binding to DNA scaffold attachment regions. Requires SYCP3, but not SYCP1, in order to be incorporated into the axial/lateral elements. This chain is Synaptonemal complex protein 2 (Sycp2), found in Rattus norvegicus (Rat).